The following is a 397-amino-acid chain: Efflux pump periplasmic linker BepD (397 aa).

Positions 1 to 26 are cleaved as a signal peptide; it reads MTLNRTIRCFAAGAAFIVFAAQPALA. A coiled-coil region spans residues 98–139; it reads APYQAELEKAQAQVAQAEAQYQQSIRDAERAEQLVQQKVQSA.

The protein belongs to the membrane fusion protein (MFP) (TC 8.A.1) family. As to quaternary structure, probably part of a tripartite efflux pump, which is composed of an outer membrane efflux protein, an inner membrane protein and a protein that expands the periplasmic space. Could form a tripartite pump with BepC and BepE.

The protein resides in the periplasm. Its function is as follows. Involved in resistance to several unrelated toxic compounds, such as dyes, detergents and antibiotics. The sequence is that of Efflux pump periplasmic linker BepD (bepD) from Brucella suis biovar 1 (strain 1330).